Consider the following 870-residue polypeptide: DNA mismatch repair protein MutS (870 aa).

Position 620 to 627 (620 to 627 (GPNMAGKS)) interacts with ATP.

This sequence belongs to the DNA mismatch repair MutS family.

This protein is involved in the repair of mismatches in DNA. It is possible that it carries out the mismatch recognition step. This protein has a weak ATPase activity. This Syntrophotalea carbinolica (strain DSM 2380 / NBRC 103641 / GraBd1) (Pelobacter carbinolicus) protein is DNA mismatch repair protein MutS.